A 75-amino-acid polypeptide reads, in one-letter code: Pro-glucagon (75 aa).

It belongs to the glucagon family.

The protein resides in the secreted. Functionally, plays a key role in glucose metabolism and homeostasis. Regulates blood glucose by increasing gluconeogenesis and decreasing glycolysis. The sequence is that of Pro-glucagon (gcg) from Amia calva (Bowfin).